Here is a 160-residue protein sequence, read N- to C-terminus: Nucleotide-binding protein BAV0791 (160 aa).

This sequence belongs to the YajQ family.

In terms of biological role, nucleotide-binding protein. The polypeptide is Nucleotide-binding protein BAV0791 (Bordetella avium (strain 197N)).